The chain runs to 413 residues: NPL4-like protein 2 (413 aa).

Position 104 is a phosphoserine (Ser104). The region spanning 131 to 272 is the MPN domain; it reads SVSFDRDAAN…ADVHFEAFQM (142 aa).

Belongs to the NPL4 family.

The protein operates within protein degradation; proteasomal ubiquitin-dependent pathway. Its function is as follows. May be part of a complex that binds ubiquitinated proteins and that is necessary for the export of misfolded proteins from the ER to the cytoplasm, where they are degraded by the proteasome. This Arabidopsis thaliana (Mouse-ear cress) protein is NPL4-like protein 2.